Here is a 139-residue protein sequence, read N- to C-terminus: uncharacterized protein (139 aa).

Transmembrane regions (helical) follow at residues 35-55 (AYFKVFSFFFFLLLTLGAAAA) and 119-139 (CCLFCCSSSYCLAGVLCVFCV).

Its subcellular location is the membrane. This is an uncharacterized protein from Saccharomyces cerevisiae (strain ATCC 204508 / S288c) (Baker's yeast).